Consider the following 357-residue polypeptide: Phosphoribosylformylglycinamidine cyclo-ligase (357 aa).

Belongs to the AIR synthase family.

The protein localises to the cytoplasm. The enzyme catalyses 2-formamido-N(1)-(5-O-phospho-beta-D-ribosyl)acetamidine + ATP = 5-amino-1-(5-phospho-beta-D-ribosyl)imidazole + ADP + phosphate + H(+). It functions in the pathway purine metabolism; IMP biosynthesis via de novo pathway; 5-amino-1-(5-phospho-D-ribosyl)imidazole from N(2)-formyl-N(1)-(5-phospho-D-ribosyl)glycinamide: step 2/2. This chain is Phosphoribosylformylglycinamidine cyclo-ligase, found in Rhodopseudomonas palustris (strain BisB18).